The primary structure comprises 508 residues: Ribonuclease Y (508 aa).

Residues 1–21 (MMLWYIVAGAGGLLIGYLIAN) form a helical membrane-spanning segment. The region spanning 198-283 (TVSTVSLPSD…EMYEKAKQEV (86 aa)) is the KH domain. The 94-residue stretch at 324–417 (VLNHSIEVAL…VAAADALSAA (94 aa)) folds into the HD domain.

It belongs to the RNase Y family.

It is found in the cell membrane. Its function is as follows. Endoribonuclease that initiates mRNA decay. The protein is Ribonuclease Y of Thermotoga maritima (strain ATCC 43589 / DSM 3109 / JCM 10099 / NBRC 100826 / MSB8).